Reading from the N-terminus, the 82-residue chain is Delta-ctenitoxin-Pn1a (82 aa).

A signal peptide spans 1 to 16 (MKVAIVFLSLLVLAFA). The propeptide occupies 17-34 (SESIEENREEFPVEESAR). 5 cysteine pairs are disulfide-bonded: C35/C49, C42/C55, C46/C82, C48/C65, and C57/C63.

This sequence belongs to the neurotoxin 03 (Tx2) family. 05 subfamily. Expressed by the venom gland.

The protein resides in the secreted. Its function is as follows. This neurotoxin binds at site 3 of insect voltage-activated sodium channels (Nav) and prolongs evoked axonal action potentials by a slowing down of sodium current inactivation. The toxin also inhibits glutamate uptake from rat brain synaptosomes. It reversibly inhibits the N-methyl-D-aspartate (NMDA)-subtype of ionotropic glutamate receptor (GRIN). In addition, the toxin shows antinociceptive effect in all rat pain models tested (inflammatory, neuropathic and nociceptive). The antinociceptive effect is partially blocked when selective antagonists of both mu- and delta-opioid receptors are administered, revealing that the antinociceptive effect of the toxin involves both opioid and cannabinoid endogenous systems. In vivo, it is highly toxic to house fly (Musca domestica), toxic to cockroach, but has no effect when intracerebroventricularly injected into mice. This Phoneutria nigriventer (Brazilian armed spider) protein is Delta-ctenitoxin-Pn1a.